We begin with the raw amino-acid sequence, 424 residues long: Neurotensin receptor type 1 (424 aa).

The interval 1-23 is disordered; sequence MHLNSSVPQGTPGEPDAQPFSGP. Topologically, residues 1-68 are extracellular; the sequence is MHLNSSVPQG…TDIYSKVLVT (68 aa). N-linked (GlcNAc...) asparagine glycosylation is found at asparagine 4, asparagine 38, and asparagine 42. The chain crosses the membrane as a helical span at residues 69–89; sequence AIYLALFVVGTVGNSVTAFTL. At 90–103 the chain is on the cytoplasmic side; the sequence is ARKKSLQSLQSTVH. The chain crosses the membrane as a helical span at residues 104–123; that stretch reads YHLGSLALSDLLILLLAMPV. Over 124-143 the chain is Extracellular; it reads ELYNFIWVHHPWAFGDAGCR. A disulfide bridge connects residues cysteine 142 and cysteine 225. The helical transmembrane segment at 144-165 threads the bilayer; sequence GYYFLRDACTYATALNVASLSV. The Cytoplasmic portion of the chain corresponds to 166 to 185; it reads ERYLAICHPFKAKTLMSRSR. Residues 186–206 form a helical membrane-spanning segment; sequence TKKFISAIWLASALLAIPMLF. The Extracellular portion of the chain corresponds to 207 to 235; that stretch reads TMGLQNRSGDGTHPGGLVCTPIVDTATVK. Residues 236–260 traverse the membrane as a helical segment; the sequence is VVIQVNTFMSFLFPMLVISILNTVI. The Cytoplasmic segment spans residues 261–308; that stretch reads ANKLTVMVHQAAEQGRVCTVGTHNGLEHSTFNMTIEPGRVQALRHGVL. A helical transmembrane segment spans residues 309 to 330; it reads VLRAVVIAFVVCWLPYHVRRLM. The tract at residues 326–349 is neurotensin binding; sequence VRRLMFCYISDEQWTTFLFDFYHY. The Extracellular segment spans residues 331–348; sequence FCYISDEQWTTFLFDFYH. Residues 349-369 traverse the membrane as a helical segment; it reads YFYMLTNALFYVSSAINPILY. At 370 to 424 the chain is on the cytoplasmic side; the sequence is NLVSANFRQVFLSTLACLCPGWRHRRKKRPTFSRKPNSMSSNHAFSTSATRETLY. Residues cysteine 386 and cysteine 388 are each lipidated (S-palmitoyl cysteine). Residues 397-424 form a disordered region; that stretch reads KRPTFSRKPNSMSSNHAFSTSATRETLY. The segment covering 403–424 has biased composition (polar residues); that stretch reads RKPNSMSSNHAFSTSATRETLY.

This sequence belongs to the G-protein coupled receptor 1 family. Neurotensin receptor subfamily. NTSR1 sub-subfamily. In terms of assembly, interacts (palmitoylated form) with GNA11. Post-translationally, N-glycosylated. Palmitoylated; this is required for normal localization at membrane rafts and normal GNA11-mediated activation of down-stream signaling cascades. The palmitoylation level increases in response to neurotensin treatment. In terms of tissue distribution, detected in brain and small intestine.

The protein resides in the cell membrane. The protein localises to the membrane raft. Its function is as follows. G-protein coupled receptor for the tridecapeptide neurotensin (NTS). Signaling is effected via G proteins that activate a phosphatidylinositol-calcium second messenger system. Signaling leads to the activation of downstream MAP kinases and protects cells against apoptosis. The protein is Neurotensin receptor type 1 (Ntsr1) of Rattus norvegicus (Rat).